The sequence spans 445 residues: Exodeoxyribonuclease 7 large subunit (445 aa).

The protein belongs to the XseA family. In terms of assembly, heterooligomer composed of large and small subunits.

It localises to the cytoplasm. The enzyme catalyses Exonucleolytic cleavage in either 5'- to 3'- or 3'- to 5'-direction to yield nucleoside 5'-phosphates.. Its function is as follows. Bidirectionally degrades single-stranded DNA into large acid-insoluble oligonucleotides, which are then degraded further into small acid-soluble oligonucleotides. In Delftia acidovorans (strain DSM 14801 / SPH-1), this protein is Exodeoxyribonuclease 7 large subunit.